We begin with the raw amino-acid sequence, 82 residues long: ATP synthase subunit c, chloroplastic (82 aa).

The next 2 helical transmembrane spans lie at 3–23 and 57–77; these read PIIS…AAIG and LAFM…LLFA.

The protein belongs to the ATPase C chain family. In terms of assembly, F-type ATPases have 2 components, F(1) - the catalytic core - and F(0) - the membrane proton channel. F(1) has five subunits: alpha(3), beta(3), gamma(1), delta(1), epsilon(1). F(0) has four main subunits: a(1), b(1), b'(1) and c(10-14). The alpha and beta chains form an alternating ring which encloses part of the gamma chain. F(1) is attached to F(0) by a central stalk formed by the gamma and epsilon chains, while a peripheral stalk is formed by the delta, b and b' chains.

It localises to the plastid. It is found in the chloroplast thylakoid membrane. Its function is as follows. F(1)F(0) ATP synthase produces ATP from ADP in the presence of a proton or sodium gradient. F-type ATPases consist of two structural domains, F(1) containing the extramembraneous catalytic core and F(0) containing the membrane proton channel, linked together by a central stalk and a peripheral stalk. During catalysis, ATP synthesis in the catalytic domain of F(1) is coupled via a rotary mechanism of the central stalk subunits to proton translocation. Key component of the F(0) channel; it plays a direct role in translocation across the membrane. A homomeric c-ring of between 10-14 subunits forms the central stalk rotor element with the F(1) delta and epsilon subunits. In Phaeodactylum tricornutum (strain CCAP 1055/1), this protein is ATP synthase subunit c, chloroplastic.